A 360-amino-acid polypeptide reads, in one-letter code: Protein Wnt-2 (360 aa).

The N-terminal stretch at 1 to 25 (MNVPLGGIWLWLPLLLTWLTPEVSS) is a signal peptide. Intrachain disulfides connect Cys-76–Cys-87, Cys-127–Cys-135, Cys-137–Cys-157, Cys-206–Cys-220, Cys-208–Cys-215, Cys-278–Cys-309, Cys-294–Cys-304, Cys-308–Cys-348, Cys-324–Cys-339, Cys-326–Cys-336, and Cys-331–Cys-332. Ser-212 carries the O-palmitoleoyl serine; by PORCN lipid modification. The N-linked (GlcNAc...) asparagine glycan is linked to Asn-295.

This sequence belongs to the Wnt family. Post-translationally, palmitoleoylation is required for efficient binding to frizzled receptors. Depalmitoleoylation leads to Wnt signaling pathway inhibition. In embryos in the developing allantois, pericardium heart, and ventral-lateral mesoderm; in adults in lung, brain, heart and placenta.

Its subcellular location is the secreted. It is found in the extracellular space. It localises to the extracellular matrix. Functionally, ligand for members of the frizzled family of seven transmembrane receptors. Functions in the canonical Wnt/beta-catenin signaling pathway. Functions as a upstream regulator of FGF10 expression. Plays an important role in embryonic lung development. May contribute to embryonic brain development by regulating the proliferation of dopaminergic precursors and neurons. The protein is Protein Wnt-2 (Wnt2) of Mus musculus (Mouse).